Reading from the N-terminus, the 282-residue chain is NH(3)-dependent NAD(+) synthetase (282 aa).

ATP is bound at residue 51 to 58; it reads GISGGVDS. Asp57 lines the Mg(2+) pocket. Arg148 contributes to the deamido-NAD(+) binding site. Thr168 contributes to the ATP binding site. Glu173 is a Mg(2+) binding site. Deamido-NAD(+) contacts are provided by Lys181 and Asp188. Positions 197 and 219 each coordinate ATP. 268 to 269 serves as a coordination point for deamido-NAD(+); the sequence is HK.

This sequence belongs to the NAD synthetase family. As to quaternary structure, homodimer.

The catalysed reaction is deamido-NAD(+) + NH4(+) + ATP = AMP + diphosphate + NAD(+) + H(+). It participates in cofactor biosynthesis; NAD(+) biosynthesis; NAD(+) from deamido-NAD(+) (ammonia route): step 1/1. Catalyzes the ATP-dependent amidation of deamido-NAD to form NAD. Uses ammonia as a nitrogen source. The polypeptide is NH(3)-dependent NAD(+) synthetase (Burkholderia cenocepacia (strain HI2424)).